Here is a 315-residue protein sequence, read N- to C-terminus: tRNA pseudouridine synthase B (315 aa).

Asp54 serves as the catalytic Nucleophile.

Belongs to the pseudouridine synthase TruB family. Type 1 subfamily.

It carries out the reaction uridine(55) in tRNA = pseudouridine(55) in tRNA. Functionally, responsible for synthesis of pseudouridine from uracil-55 in the psi GC loop of transfer RNAs. The polypeptide is tRNA pseudouridine synthase B (Cupriavidus taiwanensis (strain DSM 17343 / BCRC 17206 / CCUG 44338 / CIP 107171 / LMG 19424 / R1) (Ralstonia taiwanensis (strain LMG 19424))).